The chain runs to 118 residues: Small ribosomal subunit protein uS13 (118 aa).

The interval 94–118 (GLPLRGQRTRTNARTRKGPRKAIRK) is disordered.

This sequence belongs to the universal ribosomal protein uS13 family. In terms of assembly, part of the 30S ribosomal subunit. Forms a loose heterodimer with protein S19. Forms two bridges to the 50S subunit in the 70S ribosome.

Located at the top of the head of the 30S subunit, it contacts several helices of the 16S rRNA. In the 70S ribosome it contacts the 23S rRNA (bridge B1a) and protein L5 of the 50S subunit (bridge B1b), connecting the 2 subunits; these bridges are implicated in subunit movement. Contacts the tRNAs in the A and P-sites. The sequence is that of Small ribosomal subunit protein uS13 from Stenotrophomonas maltophilia (strain R551-3).